The sequence spans 63 residues: Mu-like prophage FluMu protein gp38 (63 aa).

It to phage Mu protein gp38.

The chain is Mu-like prophage FluMu protein gp38 from Haemophilus influenzae (strain ATCC 51907 / DSM 11121 / KW20 / Rd).